Here is a 90-residue protein sequence, read N- to C-terminus: Small ribosomal subunit protein uS19 (90 aa).

Belongs to the universal ribosomal protein uS19 family.

Functionally, protein S19 forms a complex with S13 that binds strongly to the 16S ribosomal RNA. The protein is Small ribosomal subunit protein uS19 of Clostridium beijerinckii (strain ATCC 51743 / NCIMB 8052) (Clostridium acetobutylicum).